The following is a 73-amino-acid chain: UPF0270 protein SG2298 (73 aa).

The protein belongs to the UPF0270 family.

The polypeptide is UPF0270 protein SG2298 (Sodalis glossinidius (strain morsitans)).